The following is a 440-amino-acid chain: Chromosome partition protein MukF (440 aa).

The leucine-zipper stretch occupies residues 208–236 (LSETSGTLRELQDTLEAAGDKLQANLLRI).

It belongs to the MukF family. As to quaternary structure, interacts, and probably forms a ternary complex, with MukE and MukB via its C-terminal region. The complex formation is stimulated by calcium or magnesium. It is required for an interaction between MukE and MukB.

It localises to the cytoplasm. Its subcellular location is the nucleoid. Functionally, involved in chromosome condensation, segregation and cell cycle progression. May participate in facilitating chromosome segregation by condensation DNA from both sides of a centrally located replisome during cell division. Not required for mini-F plasmid partitioning. Probably acts via its interaction with MukB and MukE. Overexpression results in anucleate cells. It has a calcium binding activity. The sequence is that of Chromosome partition protein MukF from Salmonella agona (strain SL483).